Reading from the N-terminus, the 1242-residue chain is ATP-dependent helicase/nuclease subunit A (1242 aa).

Positions 13–486 (SQWTDDQWKA…IDLAKNFRSR (474 aa)) constitute a UvrD-like helicase ATP-binding domain. ATP is bound at residue 34-41 (AAAGSGKT). The UvrD-like helicase C-terminal domain occupies 506–806 (GEIEYDADAE…RIMTIHKSKG (301 aa)).

The protein belongs to the helicase family. AddA subfamily. In terms of assembly, heterodimer of AddA and AddB/RexB. Requires Mg(2+) as cofactor.

The enzyme catalyses Couples ATP hydrolysis with the unwinding of duplex DNA by translocating in the 3'-5' direction.. It catalyses the reaction ATP + H2O = ADP + phosphate + H(+). The heterodimer acts as both an ATP-dependent DNA helicase and an ATP-dependent, dual-direction single-stranded exonuclease. Recognizes the chi site generating a DNA molecule suitable for the initiation of homologous recombination. The AddA nuclease domain is required for chi fragment generation; this subunit has the helicase and 3' -&gt; 5' nuclease activities. The protein is ATP-dependent helicase/nuclease subunit A of Bacillus cytotoxicus (strain DSM 22905 / CIP 110041 / 391-98 / NVH 391-98).